A 734-amino-acid polypeptide reads, in one-letter code: Photosystem I P700 chlorophyll a apoprotein A2 (734 aa).

Helical transmembrane passes span 46-69, 135-158, 175-199, 273-291, 330-353, 369-395, 417-439, and 517-535; these read IFAS…FHVA, LYFG…LHLQ, LNHH…HVAI, IAHH…GHMY, LHMQ…QHMY, AALY…IFFV, AIIS…LYIH, and FLVH…LILV. Positions 559 and 568 each coordinate [4Fe-4S] cluster. 2 helical membrane passes run 575 to 596 and 643 to 665; these read AFYL…YWHW and QAVW…MFLI. 3 residues coordinate chlorophyll a: H654, M662, and Y670. W671 is a phylloquinone binding site. Residues 707–727 form a helical membrane-spanning segment; that stretch reads LVGLAHFTVGFIFTFAPFVIA.

This sequence belongs to the PsaA/PsaB family. The PsaA/B heterodimer binds the P700 chlorophyll special pair and subsequent electron acceptors. PSI consists of a core antenna complex that captures photons, and an electron transfer chain that converts photonic excitation into a charge separation. The eukaryotic PSI reaction center is composed of at least 11 subunits. The cofactor is P700 is a chlorophyll a/chlorophyll a' dimer, A0 is one or more chlorophyll a, A1 is one or both phylloquinones and FX is a shared 4Fe-4S iron-sulfur center..

The protein resides in the plastid. The protein localises to the chloroplast thylakoid membrane. It carries out the reaction reduced [plastocyanin] + hnu + oxidized [2Fe-2S]-[ferredoxin] = oxidized [plastocyanin] + reduced [2Fe-2S]-[ferredoxin]. Functionally, psaA and PsaB bind P700, the primary electron donor of photosystem I (PSI), as well as the electron acceptors A0, A1 and FX. PSI is a plastocyanin/cytochrome c6-ferredoxin oxidoreductase, converting photonic excitation into a charge separation, which transfers an electron from the donor P700 chlorophyll pair to the spectroscopically characterized acceptors A0, A1, FX, FA and FB in turn. Oxidized P700 is reduced on the lumenal side of the thylakoid membrane by plastocyanin or cytochrome c6. The protein is Photosystem I P700 chlorophyll a apoprotein A2 of Emiliania huxleyi (Coccolithophore).